Consider the following 404-residue polypeptide: Ammonium transporter (404 aa).

9 consecutive transmembrane segments (helical) span residues 7 to 27 (VFMFFCALLVWLMTPGLALFY), 44 to 64 (FSSIAIVSIVWVLFGYTLAFA), 96 to 116 (LFMMFQMTFAVLTTAIISGAF), 125 to 145 (FLLFSVLWASLVYTPVAHWVW), 158 to 178 (FAGGNVVHISSGVAGLVLAIV), 227 to 247 (INTNTAAAAGIAGWILVEWII), 254 to 274 (LGAVSGAIAGLVAITPAAGFV), 277 to 297 (FASIIIGIIGGAVCFWGVFSL), and 352 to 372 (IVAIAATYVFVFIVTFVIIKI).

Belongs to the ammonia transporter channel (TC 1.A.11.2) family. Interacts with NrgB for a correct localization of the latter. GlnK-AmtB complex interacts with TnrA.

The protein resides in the cell membrane. Functionally, functions as an ammonium and methylammonium transporter in the absence of glutamine. Required for ammonium utilization at low concentrations or at low pH values, when ammonium is the single nitrogen source. Required for binding of NrgB to the membrane. Interaction between GlnK-AmtB complex and TnrA protects TnrA from proteolytic degradation. The polypeptide is Ammonium transporter (Bacillus subtilis (strain 168)).